The primary structure comprises 261 residues: Cytochrome c oxidase subunit 3 (261 aa).

Residues 1–15 (MTHQAHAYHMVDPSP) are Mitochondrial matrix-facing. The helical transmembrane segment at 16 to 34 (WPLTGAVAALLMTSGLAVW) threads the bilayer. Over 35–40 (FHFHST) the chain is Mitochondrial intermembrane. A helical transmembrane segment spans residues 41-66 (TLMALGTVLLLLTMYQWWRDIIREGT). Residues 67 to 72 (FQGHHT) lie on the Mitochondrial matrix side of the membrane. The helical transmembrane segment at 73–105 (PPVQKGLRYGMILFITSEVFFFLGFFWAFYHAS) threads the bilayer. Residues 106 to 128 (LAPTPELGGCWPPTGITTLDPFE) lie on the Mitochondrial intermembrane side of the membrane. The chain crosses the membrane as a helical span at residues 129-152 (VPLLNTAVLLASGVTVTWAHHSIM). Over 153 to 155 (EGE) the chain is Mitochondrial matrix. Residues 156–183 (RKQAIHSLTLTILLGFYFTFLQGLEYYD) traverse the membrane as a helical segment. Residues 184 to 190 (APFTIAD) lie on the Mitochondrial intermembrane side of the membrane. Residues 191-223 (GVYGSTFFVATGFHGLHVIIGSTFLAVCLLRQI) traverse the membrane as a helical segment. At 224–232 (RYHFTSEHH) the chain is on the mitochondrial matrix side. Residues 233 to 256 (FGFEAAAWYWHFVDVVWLFLYISI) form a helical membrane-spanning segment. At 257 to 261 (YWWGS) the chain is on the mitochondrial intermembrane side.

It belongs to the cytochrome c oxidase subunit 3 family. As to quaternary structure, component of the cytochrome c oxidase (complex IV, CIV), a multisubunit enzyme composed of 14 subunits. The complex is composed of a catalytic core of 3 subunits MT-CO1, MT-CO2 and MT-CO3, encoded in the mitochondrial DNA, and 11 supernumerary subunits COX4I, COX5A, COX5B, COX6A, COX6B, COX6C, COX7A, COX7B, COX7C, COX8 and NDUFA4, which are encoded in the nuclear genome. The complex exists as a monomer or a dimer and forms supercomplexes (SCs) in the inner mitochondrial membrane with NADH-ubiquinone oxidoreductase (complex I, CI) and ubiquinol-cytochrome c oxidoreductase (cytochrome b-c1 complex, complex III, CIII), resulting in different assemblies (supercomplex SCI(1)III(2)IV(1) and megacomplex MCI(2)III(2)IV(2)).

The protein localises to the mitochondrion inner membrane. It catalyses the reaction 4 Fe(II)-[cytochrome c] + O2 + 8 H(+)(in) = 4 Fe(III)-[cytochrome c] + 2 H2O + 4 H(+)(out). Functionally, component of the cytochrome c oxidase, the last enzyme in the mitochondrial electron transport chain which drives oxidative phosphorylation. The respiratory chain contains 3 multisubunit complexes succinate dehydrogenase (complex II, CII), ubiquinol-cytochrome c oxidoreductase (cytochrome b-c1 complex, complex III, CIII) and cytochrome c oxidase (complex IV, CIV), that cooperate to transfer electrons derived from NADH and succinate to molecular oxygen, creating an electrochemical gradient over the inner membrane that drives transmembrane transport and the ATP synthase. Cytochrome c oxidase is the component of the respiratory chain that catalyzes the reduction of oxygen to water. Electrons originating from reduced cytochrome c in the intermembrane space (IMS) are transferred via the dinuclear copper A center (CU(A)) of subunit 2 and heme A of subunit 1 to the active site in subunit 1, a binuclear center (BNC) formed by heme A3 and copper B (CU(B)). The BNC reduces molecular oxygen to 2 water molecules using 4 electrons from cytochrome c in the IMS and 4 protons from the mitochondrial matrix. The sequence is that of Cytochrome c oxidase subunit 3 (mt-co3) from Gadus morhua (Atlantic cod).